Here is a 327-residue protein sequence, read N- to C-terminus: Phenylalanine--tRNA ligase alpha subunit (327 aa).

Mg(2+) is bound at residue Glu-252.

Belongs to the class-II aminoacyl-tRNA synthetase family. Phe-tRNA synthetase alpha subunit type 1 subfamily. In terms of assembly, tetramer of two alpha and two beta subunits. Mg(2+) serves as cofactor.

It localises to the cytoplasm. It carries out the reaction tRNA(Phe) + L-phenylalanine + ATP = L-phenylalanyl-tRNA(Phe) + AMP + diphosphate + H(+). This is Phenylalanine--tRNA ligase alpha subunit from Vibrio cholerae serotype O1 (strain ATCC 39541 / Classical Ogawa 395 / O395).